A 210-amino-acid chain; its full sequence is Tetraspanin-31 (210 aa).

Topologically, residues 1–12 (MVCGGFACSKNA) are cytoplasmic. A helical transmembrane segment spans residues 13–33 (LCALNVVYMLVGLLLIGVAAW). The Extracellular portion of the chain corresponds to 34–44 (AKGLGLVSSIH). The chain crosses the membrane as a helical span at residues 45–65 (IIGGVIAVGVFLLLIAVAGLV). The Cytoplasmic portion of the chain corresponds to 66-72 (GAVNHHQ). The chain crosses the membrane as a helical span at residues 73–93 (VLLFFYMIILGLVFIFQFGIS). The Extracellular segment spans residues 94 to 173 (CSCLAINLSK…FLKHSDEALK (80 aa)). Asparagine 100, asparagine 109, asparagine 117, and asparagine 134 each carry an N-linked (GlcNAc...) asparagine glycan. The helical transmembrane segment at 174 to 194 (ILGGVGLFFSFTEILGVWLAM) threads the bilayer. Over 195-210 (RFRNQKDPRANPSAFL) the chain is Cytoplasmic.

This sequence belongs to the tetraspanin (TM4SF) family.

Its subcellular location is the membrane. This Bos taurus (Bovine) protein is Tetraspanin-31 (TSPAN31).